The following is a 215-amino-acid chain: MNLVMLILALWAPVAGSMPELSLTLFDEPPPLVETEPLPPLSDVSEYRVEYSEARCVLRSGGRLEALWTLRGNLSVPTPTPRVYYQTLEGYADRVPTPVEDVSESLVAKRYWLRDYRVPQRTKLVLFYFSPCHQCQTYYVECEPRCLVPWVPLWSSLEDIERLLFEDRRLMAYYALTIKSAQYTLMMVAVIQVFWGLYVKGWLHRHFPWMFSDQW.

Positions 1–17 (MNLVMLILALWAPVAGS) form a signal peptide, partially cleaved. Residues 18–182 (MPELSLTLFD…YYALTIKSAQ (165 aa)) are Lumenal-facing. Residues 47–146 (YRVEYSEARC…TYYVECEPRC (100 aa)) enclose the Ig-like H-type domain. Residues C56 and C142 are joined by a disulfide bond. The N-linked (GlcNAc...) asparagine; by host glycan is linked to N73. A helical membrane pass occupies residues 183–203 (YTLMMVAVIQVFWGLYVKGWL). The Cytoplasmic segment spans residues 204–215 (HRHFPWMFSDQW).

This sequence belongs to the cytomegalovirus US6 family. Interacts with host TRAM1. In terms of processing, N-glycosylated. Post-translationally, a fraction of newly synthesized molecules retain the signal peptide after the N-linked glycan has been attached and translation of the polypeptide has been completed. Delayed cleavage of the signal peptide is determined by the first four residues, as well as by the transmembrane region.

The protein localises to the host endoplasmic reticulum membrane. Participates in the inhibition of the host immune response. Redirects newly synthesized major histocompatibility complex (MHC) class I heavy chains via the SEC61 translocon to the cytosol where they undergo proteasome-dependent destruction. In consequence, infected cells are masked for immune recognition by cytotoxic T-lymphocytes. This chain is Unique short US11 glycoprotein (US11), found in Human cytomegalovirus (strain AD169) (HHV-5).